The sequence spans 43 residues: MKKVFFGLVILTALAISFVAGQQSVSTASASDEVTVASAIRGA.

A signal peptide spans 1–30 (MKKVFFGLVILTALAISFVAGQQSVSTASA).

In terms of assembly, interacts with the viral AimR transcriptional regulator; this interaction changes the oligomeric state of AimR from an active dimer to an inactive monomer leading to lysogeny. Post-translationally, cleaved by host extracellular proteases, thereby releasing the mature arbitrium peptide.

It is found in the secreted. Its function is as follows. Part of the latency-replication switch system which decides at the onset of infection whether to replicate and lyse the host or to lysogenize (latency) and keep the host viable. Peptide which is released by the infected host bacteria and acts as a communication agent that affects the latency versus replication (lysogeny-lysis) decision for any new infecting virus from the same specie. High concentration of arbitrium peptide results in increased lysogeny in the upcoming viruses. The arbitrium peptide is secreted by infected bacteria and, after several cycles of infection, accumulates in the extracellular medium. When a virus from the same specie subsequently infects an uninfected bacterium which has internalized the peptide via its OPP transporter, the peptide will binds to the viral AimR transcriptional regulator and prevents AimR transcriptional activation of the aimX locus. Inhibition of aimX transcription promotes lysogeny. This Bacillus phage phi3T (Bacteriophage phi-3T) protein is Protein AimP (aimP).